The primary structure comprises 80 residues: Small ribosomal subunit protein bS18 (80 aa).

The protein belongs to the bacterial ribosomal protein bS18 family. Part of the 30S ribosomal subunit. Forms a tight heterodimer with protein bS6.

Binds as a heterodimer with protein bS6 to the central domain of the 16S rRNA, where it helps stabilize the platform of the 30S subunit. The chain is Small ribosomal subunit protein bS18 from Staphylococcus carnosus (strain TM300).